The sequence spans 103 residues: Flagellar hook-basal body complex protein FliE (103 aa).

This sequence belongs to the FliE family.

It is found in the bacterial flagellum basal body. This Helicobacter hepaticus (strain ATCC 51449 / 3B1) protein is Flagellar hook-basal body complex protein FliE.